We begin with the raw amino-acid sequence, 301 residues long: Homoserine O-acetyltransferase (301 aa).

Cysteine 142 (acyl-thioester intermediate) is an active-site residue. The substrate site is built by lysine 163 and serine 192. Histidine 235 functions as the Proton acceptor in the catalytic mechanism. The active site involves glutamate 237. A substrate-binding site is contributed by arginine 249.

Belongs to the MetA family.

It localises to the cytoplasm. The catalysed reaction is L-homoserine + acetyl-CoA = O-acetyl-L-homoserine + CoA. Its pathway is amino-acid biosynthesis; L-methionine biosynthesis via de novo pathway; O-acetyl-L-homoserine from L-homoserine: step 1/1. Its function is as follows. Transfers an acetyl group from acetyl-CoA to L-homoserine, forming acetyl-L-homoserine. The sequence is that of Homoserine O-acetyltransferase from Bacillus subtilis (strain 168).